The primary structure comprises 364 residues: FK506-binding protein 4 (364 aa).

Disordered regions lie at residues 92 to 148 (SMFG…DDEI) and 168 to 239 (EADK…PTKP). A compositionally biased stretch (acidic residues) spans 94–148 (FGDDEHGEDEDNEEEEGEEGEDEEMEGEDEDEDEEDEDEEDEDEEEEDDEEDDEI). The segment covering 168-184 (EADKNKQQKKPKQEEPV) has biased composition (basic and acidic residues). A compositionally biased stretch (low complexity) spans 185-239 (KQVTPVKPTAQAAKPTAATTTTTTTTTTTPTKQTTPAKPAAKPVTPTKPVTPTKP). Residues 277-363 (GKKVGVKYIG…IFDVELVSCA (87 aa)) enclose the PPIase FKBP-type domain.

Belongs to the FKBP-type PPIase family. In terms of assembly, binds to histones H3 and H4.

Its subcellular location is the nucleus. The catalysed reaction is [protein]-peptidylproline (omega=180) = [protein]-peptidylproline (omega=0). With respect to regulation, inhibited by both FK506 and rapamycin. Functionally, PPIase that acts as a histone chaperone. Histone proline isomerase that increases the rate of cis-trans isomerization at prolines on the histone H3 N-terminal tail. Proline isomerization influences H3 methylation thereby regulating gene expression. The polypeptide is FK506-binding protein 4 (fkbp4) (Dictyostelium discoideum (Social amoeba)).